A 650-amino-acid chain; its full sequence is Secretin OutD (650 aa).

Positions 1–18 (MLLLSGSVLLMASSLAWS) are cleaved as a signal peptide. The interval 20–115 (EFSASFKGTD…LATDRQPGIG (96 aa)) is N0. The interval 117 to 181 (EVVTRVVPVN…TIVERVDQTG (65 aa)) is N1. The tract at residues 182 to 255 (DRNVTTIPLS…MVKQLDRQQA (74 aa)) is N2. Residues 258–330 (GNTKVIYLKY…DLEQVIAQLD (73 aa)) are N3. A secretin region spans residues 335 to 585 (QVLVEAIIAE…LFIRPSIIRD (251 aa)). A s domain region spans residues 587–650 (SQFQSASASK…IVAFYPAGGK (64 aa)).

This sequence belongs to the bacterial secretin family. GSP D subfamily. As to quaternary structure, forms a cylindrical channel with 15 subunits.

Its subcellular location is the cell outer membrane. In terms of biological role, involved in a type II secretion system (T2SS, formerly general secretion pathway, GSP) for the export of proteins. Required for the translocation of the multiple pectic enzymes. This subunit forms the outer membrane channel. The protein is Secretin OutD (outD) of Pectobacterium carotovorum subsp. carotovorum (Erwinia carotovora subsp. carotovora).